Consider the following 404-residue polypeptide: Argininosuccinate synthase (404 aa).

Residues 10-18 (AFSGGLDTS) and alanine 37 each bind ATP. Positions 88 and 93 each coordinate L-citrulline. Residue glycine 118 participates in ATP binding. L-aspartate contacts are provided by threonine 120, asparagine 124, and aspartate 125. Asparagine 124 lines the L-citrulline pocket. Residues arginine 128, serine 179, serine 188, glutamate 264, and tyrosine 276 each contribute to the L-citrulline site.

This sequence belongs to the argininosuccinate synthase family. Type 1 subfamily. Homotetramer.

Its subcellular location is the cytoplasm. It catalyses the reaction L-citrulline + L-aspartate + ATP = 2-(N(omega)-L-arginino)succinate + AMP + diphosphate + H(+). It functions in the pathway amino-acid biosynthesis; L-arginine biosynthesis; L-arginine from L-ornithine and carbamoyl phosphate: step 2/3. This Nitrosomonas europaea (strain ATCC 19718 / CIP 103999 / KCTC 2705 / NBRC 14298) protein is Argininosuccinate synthase.